The primary structure comprises 383 residues: Chaperone protein DnaJ (383 aa).

Residues 5–70 (DYYDVLGVSK…DKKAAYDRYG (66 aa)) form the J domain. Residues 142–220 (GMQKTISVPG…CRGAGREEKT (79 aa)) form a CR-type zinc finger. 8 residues coordinate Zn(2+): cysteine 155, cysteine 158, cysteine 172, cysteine 175, cysteine 194, cysteine 197, cysteine 208, and cysteine 211. CXXCXGXG motif repeat units lie at residues 155-162 (CSACEGTG), 172-179 (CPTCSGMG), 194-201 (CPTCSGMG), and 208-215 (CQACRGAG).

Belongs to the DnaJ family. As to quaternary structure, homodimer. Zn(2+) is required as a cofactor.

It localises to the cytoplasm. Participates actively in the response to hyperosmotic and heat shock by preventing the aggregation of stress-denatured proteins and by disaggregating proteins, also in an autonomous, DnaK-independent fashion. Unfolded proteins bind initially to DnaJ; upon interaction with the DnaJ-bound protein, DnaK hydrolyzes its bound ATP, resulting in the formation of a stable complex. GrpE releases ADP from DnaK; ATP binding to DnaK triggers the release of the substrate protein, thus completing the reaction cycle. Several rounds of ATP-dependent interactions between DnaJ, DnaK and GrpE are required for fully efficient folding. Also involved, together with DnaK and GrpE, in the DNA replication of plasmids through activation of initiation proteins. The sequence is that of Chaperone protein DnaJ from Dinoroseobacter shibae (strain DSM 16493 / NCIMB 14021 / DFL 12).